Reading from the N-terminus, the 208-residue chain is uncharacterized protein (208 aa).

This is an uncharacterized protein from Ictalurid herpesvirus 1 (strain Auburn) (IcHV-1).